Consider the following 231-residue polypeptide: Putative N-acetylmannosamine-6-phosphate 2-epimerase (231 aa).

This sequence belongs to the NanE family.

The enzyme catalyses an N-acyl-D-glucosamine 6-phosphate = an N-acyl-D-mannosamine 6-phosphate. It functions in the pathway amino-sugar metabolism; N-acetylneuraminate degradation; D-fructose 6-phosphate from N-acetylneuraminate: step 3/5. Its function is as follows. Converts N-acetylmannosamine-6-phosphate (ManNAc-6-P) to N-acetylglucosamine-6-phosphate (GlcNAc-6-P). The chain is Putative N-acetylmannosamine-6-phosphate 2-epimerase from Listeria monocytogenes serotype 4b (strain F2365).